The following is a 247-amino-acid chain: 3-deoxy-manno-octulosonate cytidylyltransferase (247 aa).

The protein belongs to the KdsB family.

It is found in the cytoplasm. The enzyme catalyses 3-deoxy-alpha-D-manno-oct-2-ulosonate + CTP = CMP-3-deoxy-beta-D-manno-octulosonate + diphosphate. It functions in the pathway nucleotide-sugar biosynthesis; CMP-3-deoxy-D-manno-octulosonate biosynthesis; CMP-3-deoxy-D-manno-octulosonate from 3-deoxy-D-manno-octulosonate and CTP: step 1/1. It participates in bacterial outer membrane biogenesis; lipopolysaccharide biosynthesis. Its function is as follows. Activates KDO (a required 8-carbon sugar) for incorporation into bacterial lipopolysaccharide in Gram-negative bacteria. This is 3-deoxy-manno-octulosonate cytidylyltransferase from Methylobacterium nodulans (strain LMG 21967 / CNCM I-2342 / ORS 2060).